The primary structure comprises 1607 residues: Phosphatidylinositol 3-kinase piki-1 (1607 aa).

Residues 2–21 (SDDEELQLAIEISKKTFKDE) form the UIM domain. Disordered regions lie at residues 54 to 91 (EANSPGPSSYSGSLATSPIDFRPVYNEPRAGPIPHSQS), 105 to 128 (STSQPPAFPPPPRPPKPEQYKFPP), and 142 to 182 (PPPP…SFAS). The span at 58-69 (PGPSSYSGSLAT) shows a compositional bias: polar residues. The span at 158–169 (PPVPIHPTPPVS) shows a compositional bias: pro residues. Residues 362–453 (ASTVKVVVYK…GDDVKLDLGV (92 aa)) enclose the PI3K-RBD domain. The 169-residue stretch at 598–766 (KMDFLQIMLN…KIWDTEIYFP (169 aa)) folds into the C2 PI3K-type domain. The region spanning 776–953 (PQDFATLDIE…AIRCQNLQQK (178 aa)) is the PIK helical domain. Positions 1029–1303 (RIEECSVFNS…MIQNSLGSAF (275 aa)) constitute a PI3K/PI4K catalytic domain. The segment at 1035–1041 (VFNSNAK) is G-loop. The segment at 1168-1176 (GIGDRHNDN) is catalytic loop. Positions 1187–1213 (HIDFGKYMGDWQMAAGFRRDRVPFVFT) are activation loop. The PX domain maps to 1344–1458 (GRISRVTVLK…TFFHSILRDN (115 aa)). A C2 domain is found at 1472 to 1601 (SQCQIYLKIE…KNCRTLEGWF (130 aa)).

This sequence belongs to the PI3/PI4-kinase family.

It localises to the cell projection. Its subcellular location is the phagocytic cup. The protein resides in the cytoplasmic vesicle. It is found in the phagosome membrane. The protein localises to the cytoplasm. It catalyses the reaction a 1,2-diacyl-sn-glycero-3-phospho-(1D-myo-inositol) + ATP = a 1,2-diacyl-sn-glycero-3-phospho-(1D-myo-inositol-3-phosphate) + ADP + H(+). Phosphatidylinositol 3-kinase involved in clearance of apoptotic cell corpses by phagosomes. Phagosome maturation requires two sequential and non-overlapping pulses of phosphatidylinositol-3-phosphate (PI3P) on the vesicle surface which mediates recruitment of sortins snx-1 and lst-4 and small GTPases rab-5, rab-2 and rab-7. The first pulse is initiated by piki-1, then maintained by vps-34 which also produces the second pulse. Unlike vps-34, not involved in the formation of PI3P in early endosomes. This Caenorhabditis elegans protein is Phosphatidylinositol 3-kinase piki-1.